The following is a 104-amino-acid chain: Type VII secretion system extracellular protein B (104 aa).

The protein belongs to the WXG100 family. Homodimer. When mixed with EsxA does not form heterodimers.

It is found in the secreted. Virulence factor that is important for the establishment of infection in the host. EsxB is required for EsxA synthesis as well as secretion. Mediates together with EsxA the release of S.aureus from the host cell. Also inhibits host cytokine production and thus modulates dendritic cell-mediated immunity. This is Type VII secretion system extracellular protein B from Staphylococcus aureus (strain MSSA476).